The following is a 362-amino-acid chain: Dihydroorotate dehydrogenase (quinone) (362 aa).

Residues 62-66 (AGYDK) and Thr-86 contribute to the FMN site. Position 66 (Lys-66) interacts with substrate. 111–115 (NRLGF) contributes to the substrate binding site. Positions 139 and 170 each coordinate FMN. Substrate is bound at residue Asn-170. The active-site Nucleophile is Ser-173. Asn-175 serves as a coordination point for substrate. FMN contacts are provided by Lys-215 and Ser-243. 244–245 (NT) contributes to the substrate binding site. Residues Gly-266, Gly-295, and 316–317 (YS) contribute to the FMN site.

Belongs to the dihydroorotate dehydrogenase family. Type 2 subfamily. In terms of assembly, monomer. FMN is required as a cofactor.

The protein localises to the cell membrane. It catalyses the reaction (S)-dihydroorotate + a quinone = orotate + a quinol. Its pathway is pyrimidine metabolism; UMP biosynthesis via de novo pathway; orotate from (S)-dihydroorotate (quinone route): step 1/1. Catalyzes the conversion of dihydroorotate to orotate with quinone as electron acceptor. The sequence is that of Dihydroorotate dehydrogenase (quinone) from Rhizobium meliloti (strain 1021) (Ensifer meliloti).